Reading from the N-terminus, the 367-residue chain is Phosphoribosylaminoimidazole-succinocarboxamide synthase (367 aa).

It belongs to the SAICAR synthetase family.

It carries out the reaction 5-amino-1-(5-phospho-D-ribosyl)imidazole-4-carboxylate + L-aspartate + ATP = (2S)-2-[5-amino-1-(5-phospho-beta-D-ribosyl)imidazole-4-carboxamido]succinate + ADP + phosphate + 2 H(+). It functions in the pathway purine metabolism; IMP biosynthesis via de novo pathway; 5-amino-1-(5-phospho-D-ribosyl)imidazole-4-carboxamide from 5-amino-1-(5-phospho-D-ribosyl)imidazole-4-carboxylate: step 1/2. The chain is Phosphoribosylaminoimidazole-succinocarboxamide synthase from Shewanella piezotolerans (strain WP3 / JCM 13877).